The chain runs to 552 residues: Arginine--tRNA ligase (552 aa).

The 'HIGH' region motif lies at 124-134 (GNPTGPLHLAH).

It belongs to the class-I aminoacyl-tRNA synthetase family. In terms of assembly, monomer.

The protein resides in the cytoplasm. It carries out the reaction tRNA(Arg) + L-arginine + ATP = L-arginyl-tRNA(Arg) + AMP + diphosphate. In Tropheryma whipplei (strain Twist) (Whipple's bacillus), this protein is Arginine--tRNA ligase.